Reading from the N-terminus, the 708-residue chain is Lactotransferrin (708 aa).

Residues 1 to 19 form the signal peptide; it reads MKLFVPALLSLGALGLCLA. 2 consecutive Transferrin-like domains span residues 25–352 and 364–693; these read VRWC…NLRE and VVWC…NLKK. 2 cysteine pairs are disulfide-bonded: Cys28–Cys64 and Cys38–Cys55. Residue Asp79 coordinates Fe(3+). Residue Lys92 is part of the active site. Residue Tyr111 coordinates Fe(3+). 5 disulfide bridges follow: Cys134–Cys217, Cys176–Cys192, Cys179–Cys202, Cys189–Cys200, and Cys250–Cys264. Hydrogencarbonate-binding residues include Arg140, Ala142, and Gly143. Tyr211 is a Fe(3+) binding site. N-linked (GlcNAc...) (high mannose) asparagine glycosylation is present at Asn252. Fe(3+) is bound at residue His272. Residue Ser278 is the Nucleophile of the active site. An N-linked (GlcNAc...) asparagine glycan is attached at Asn300. 2 disulfides stabilise this stretch: Cys367-Cys399 and Cys377-Cys390. Asn387 carries an N-linked (GlcNAc...) (complex) asparagine; alternate glycan. Asn387 is a glycosylation site (N-linked (GlcNAc...) (high mannose) asparagine; alternate). N-linked (GlcNAc...) (hybrid) asparagine; alternate glycosylation is present at Asn387. Fe(3+)-binding residues include Asp414 and Tyr452. 8 disulfides stabilise this stretch: Cys424–Cys703, Cys444–Cys666, Cys476–Cys551, Cys500–Cys694, Cys510–Cys524, Cys521–Cys534, Cys592–Cys606, and Cys644–Cys649. Positions 478, 482, 484, and 485 each coordinate hydrogencarbonate. Asn495 is a glycosylation site (N-linked (GlcNAc...) (complex) asparagine; alternate). An N-linked (GlcNAc...) (high mannose) asparagine; alternate glycan is attached at Asn495. An N-linked (GlcNAc...) (hybrid) asparagine; alternate glycan is attached at Asn495. A Fe(3+)-binding site is contributed by Tyr545. Asn564 carries N-linked (GlcNAc...) (high mannose) asparagine glycosylation. His614 lines the Fe(3+) pocket.

It belongs to the transferrin family. As to quaternary structure, monomer. Found in a complex with LTF, CLU, EPPIN and SEMG1. Found in a complex with MPO and LTF; interacts directly with CP, allows Fe(3+) incorporation into LTF and activation of CP ferroxidase activity. Poly-N-acetyllactosaminic carbohydrate moiety seems to be needed for TLR4 activation.

The protein resides in the secreted. Its subcellular location is the cytoplasmic granule. Its function is as follows. Transferrins are iron binding transport proteins which can bind two Fe(3+) ions in association with the binding of an anion, usually bicarbonate. Major iron-binding and multifunctional protein found in exocrine fluids such as breast milk and mucosal secretions. Has antimicrobial activity, which depends on the extracellular cation concentration. Antimicrobial properties include bacteriostasis, which is related to its ability to sequester free iron and thus inhibit microbial growth, as well as direct bactericidal properties leading to the release of lipopolysaccharides from the bacterial outer membrane. Can also prevent bacterial biofilm development in P.aeruginosa infection. Has weak antifungal activity against C.albicans. Has anabolic, differentiating and anti-apoptotic effects on osteoblasts and can also inhibit osteoclastogenesis, possibly playing a role in the regulation of bone growth. Promotes binding of species C adenoviruses to epithelial cells, promoting adenovirus infection. Can inhibit papillomavirus infections. Stimulates the TLR4 signaling pathway leading to NF-kappa-B activation and subsequent pro-inflammatory cytokine production while also interfering with the lipopolysaccharide (LPS)-stimulated TLR4 signaling. Inhibits neutrophil granulocyte migration to sites of apoptosis, when secreted by apoptotic cells. Stimulates VEGFA-mediated endothelial cell migration and proliferation. Binds heparin, chondroitin sulfate and possibly other glycosaminoglycans (GAGs). Also binds specifically to pneumococcal surface protein A (PspA), the lipid A portion of bacterial lipopolysaccharide (LPS), lysozyme and DNA. Functionally, lactoferricin binds to the bacterial surface and is crucial for the bactericidal functions. Has some antiviral activity against papillomavirus infection. N-terminal region shows strong antifungal activity against C.albicans. Contains two BBXB heparin-binding consensus sequences that appear to form the predominate functional GAG-binding site. In terms of biological role, the lactotransferrin transferrin-like domain 1 functions as a serine protease of the peptidase S60 family that cuts arginine rich regions. This function contributes to the antimicrobial activity. Shows a preferential cleavage at -Arg-Ser-Arg-Arg-|- and -Arg-Arg-Ser-Arg-|-, and of Z-Phe-Arg-|-aminomethylcoumarin sites. This is Lactotransferrin (LTF) from Capra hircus (Goat).